A 291-amino-acid chain; its full sequence is MNWFTKLLPKISTANKKGVPEGVWHKCPSCTAVLYRVELERNLEVCPKCYYHIRLDPRKRLAQFLDEGEQEELAEDILPVDRLKFRDSKKYKDRLSAAQKATEEKEALVVYKGNIYGNPIVAAAFNFFFVGGSMGAAVGERFAAGVEAAISERLPFVCFSTSGGARMQEGLFSLFQMAKTSAVLARLAEYKLPYISVLTDPTMGGVSASLAMLGDVIIAEPNALIGFSGPRVIEQTIRQTLPEGFQRSEFLLEHGAIDMVVDRRELKSTIASLITKLTHQPPPDLPVEESV.

The region spanning 23-291 is the CoA carboxyltransferase N-terminal domain; it reads VWHKCPSCTA…PPDLPVEESV (269 aa). Residues C27, C30, C46, and C49 each coordinate Zn(2+). The C4-type zinc finger occupies 27–49; the sequence is CPSCTAVLYRVELERNLEVCPKC.

Belongs to the AccD/PCCB family. Acetyl-CoA carboxylase is a heterohexamer composed of biotin carboxyl carrier protein (AccB), biotin carboxylase (AccC) and two subunits each of ACCase subunit alpha (AccA) and ACCase subunit beta (AccD). The cofactor is Zn(2+).

It localises to the cytoplasm. The enzyme catalyses N(6)-carboxybiotinyl-L-lysyl-[protein] + acetyl-CoA = N(6)-biotinyl-L-lysyl-[protein] + malonyl-CoA. It participates in lipid metabolism; malonyl-CoA biosynthesis; malonyl-CoA from acetyl-CoA: step 1/1. Functionally, component of the acetyl coenzyme A carboxylase (ACC) complex. Biotin carboxylase (BC) catalyzes the carboxylation of biotin on its carrier protein (BCCP) and then the CO(2) group is transferred by the transcarboxylase to acetyl-CoA to form malonyl-CoA. The protein is Acetyl-coenzyme A carboxylase carboxyl transferase subunit beta of Coxiella burnetii (strain RSA 331 / Henzerling II).